A 476-amino-acid chain; its full sequence is Acyl-lipid omega-13 desaturase (476 aa).

The Cytochrome b5 heme-binding domain occupies 10 to 75 (GPALPSIPHQ…HLRVLERFRV (66 aa)). Positions 37 and 60 each coordinate heme. 2 helical membrane passes run 146–166 (PFVILHCLHVVGLIWSMKLWW) and 168–188 (GAFISAFILPYFLWVLCAAMV). The short motif at 189–193 (HDGGH) is the Histidine box-1 element. Positions 224-229 (HNILHH) match the Histidine box-2 motif. 3 consecutive transmembrane segments (helical) span residues 267 to 287 (FFSHLIMYNFAHIGLTMISPL), 315 to 335 (YHSTVMLQLVTVGAFYITPFL), and 343 to 363 (LLLTLLPTFMMSVAFMVIAQV). Positions 410 to 414 (QSLHH) match the Histidine box-3 motif.

It belongs to the fatty acid desaturase type 1 family.

The protein resides in the membrane. The catalysed reaction is a (9Z,12Z)-octadecadienoyl-containing glycerolipid + 2 Fe(II)-[cytochrome b5] + O2 + 2 H(+) = a (5Z,9Z,12Z)-octadecatrienoyl-containing glycerolipid + 2 Fe(III)-[cytochrome b5] + 2 H2O. The enzyme catalyses (9Z,12Z,15Z)-octadecatrienoyl-containing glycerolipid + 2 Fe(II)-[cytochrome b5] + O2 + 2 H(+) = a (5Z,9Z,12Z,15Z)-octadecatetraenoyl-containing glycerolipid + 2 Fe(III)-[cytochrome b5] + 2 H2O. Its pathway is lipid metabolism; polyunsaturated fatty acid biosynthesis. In terms of biological role, front-end desaturase having a omega-13 desaturase activity for omega-9 unsaturated C18/C20 fatty acids. Strong substrate preferences for linoleic acid and alpha-linolenic acid for the production of pinolenic and coniferonic acids respectively. No desaturase activity for dihomo gamma-linolenic acid and eicosatertraenoic acid. The chain is Acyl-lipid omega-13 desaturase from Chlamydomonas reinhardtii (Chlamydomonas smithii).